The chain runs to 147 residues: 3-dehydroquinate dehydratase (147 aa).

Tyrosine 23 acts as the Proton acceptor in catalysis. The substrate site is built by asparagine 74, histidine 80, and aspartate 87. Histidine 100 acts as the Proton donor in catalysis. Residues 101 to 102 (IS) and arginine 111 contribute to the substrate site.

The protein belongs to the type-II 3-dehydroquinase family. As to quaternary structure, homododecamer.

It catalyses the reaction 3-dehydroquinate = 3-dehydroshikimate + H2O. It functions in the pathway metabolic intermediate biosynthesis; chorismate biosynthesis; chorismate from D-erythrose 4-phosphate and phosphoenolpyruvate: step 3/7. In terms of biological role, catalyzes a trans-dehydration via an enolate intermediate. The protein is 3-dehydroquinate dehydratase of Prochlorococcus marinus (strain MIT 9215).